The following is a 150-amino-acid chain: HTH-type transcriptional regulator LrpA (150 aa).

The region spanning 5–66 (LDDIDRILVR…RINPEAVGHL (62 aa)) is the HTH asnC-type domain. The H-T-H motif DNA-binding region spans 24–43 (LSELATRAGLSVSAVQSRVR). L-phenylalanine is bound by residues V100, G102, and E104.

Homohexadecamer in the absence of any added ligand. Homooctamer. Tetramer of dimers. In the presence of phenylalanine, the hexadecamer dissociates into an octamer, which further dissociates partially into lower-order oligomers.

The DNA-binding activity of LrpA is modulated by interaction of LrpA with various effector molecules, including amino acids and vitamins. The DNA binding affinity is decreased by several amino acids, including phenylalanine, tyrosine, tryptophan, histidine, leucine and aspartate. Preferentially binds to aromatic amino acids. Besides amino acids, the binding affinity is also reduced by vitamins, including B1, B3, B6, VC, B7, B9, B12, VA and VK3. In terms of biological role, transcriptional regulator that probably plays an important role in M.tuberculosis persistence. Regulates the expression of several genes, including lat, rsmG, whiB2, lsr2 and Rv2011c. Acts by binding directly to the promoter region of the target genes. The polypeptide is HTH-type transcriptional regulator LrpA (Mycobacterium tuberculosis (strain ATCC 25618 / H37Rv)).